Consider the following 208-residue polypeptide: Ribosomal RNA small subunit methyltransferase G (208 aa).

S-adenosyl-L-methionine-binding positions include G73, L78, 127–128 (VE), and R141.

It belongs to the methyltransferase superfamily. RNA methyltransferase RsmG family.

It localises to the cytoplasm. It carries out the reaction guanosine(527) in 16S rRNA + S-adenosyl-L-methionine = N(7)-methylguanosine(527) in 16S rRNA + S-adenosyl-L-homocysteine. In terms of biological role, specifically methylates the N7 position of guanine in position 527 of 16S rRNA. The chain is Ribosomal RNA small subunit methyltransferase G from Cereibacter sphaeroides (strain ATCC 17025 / ATH 2.4.3) (Rhodobacter sphaeroides).